A 223-amino-acid polypeptide reads, in one-letter code: Ribose-5-phosphate isomerase A (223 aa).

Residues 29–32 (TGST), 82–85 (DGAD), and 95–98 (KGGG) each bind substrate. The active-site Proton acceptor is the Glu-104. Position 122 (Lys-122) interacts with substrate.

Belongs to the ribose 5-phosphate isomerase family. As to quaternary structure, homodimer.

The enzyme catalyses aldehydo-D-ribose 5-phosphate = D-ribulose 5-phosphate. Its pathway is carbohydrate degradation; pentose phosphate pathway; D-ribose 5-phosphate from D-ribulose 5-phosphate (non-oxidative stage): step 1/1. In terms of biological role, catalyzes the reversible conversion of ribose-5-phosphate to ribulose 5-phosphate. The sequence is that of Ribose-5-phosphate isomerase A from Neisseria meningitidis serogroup C (strain 053442).